The chain runs to 257 residues: uncharacterized protein (257 aa).

A helical membrane pass occupies residues 6 to 26 (IFWLNLAAIIIISIVVSGGMF).

It belongs to the staphylococcal tandem lipoprotein family.

The protein resides in the cell membrane. This is an uncharacterized protein from Staphylococcus aureus (strain MSSA476).